The sequence spans 532 residues: Glucose-6-phosphate isomerase (532 aa).

Catalysis depends on Glu330, which acts as the Proton donor. Active-site residues include His359 and Lys461.

Belongs to the GPI family.

Its subcellular location is the cytoplasm. It catalyses the reaction alpha-D-glucose 6-phosphate = beta-D-fructose 6-phosphate. It functions in the pathway carbohydrate biosynthesis; gluconeogenesis. It participates in carbohydrate degradation; glycolysis; D-glyceraldehyde 3-phosphate and glycerone phosphate from D-glucose: step 2/4. In terms of biological role, catalyzes the reversible isomerization of glucose-6-phosphate to fructose-6-phosphate. The chain is Glucose-6-phosphate isomerase from Synechococcus sp. (strain CC9902).